Consider the following 378-residue polypeptide: Erythronate-4-phosphate dehydrogenase (378 aa).

Substrate is bound by residues Ser-45 and Thr-66. Residues Asp-146 and Thr-175 each contribute to the NAD(+) site. The active site involves Arg-208. NAD(+) is bound at residue Asp-232. Glu-237 is a catalytic residue. The active-site Proton donor is His-254. Gly-257 provides a ligand contact to NAD(+). Tyr-258 contacts substrate.

The protein belongs to the D-isomer specific 2-hydroxyacid dehydrogenase family. PdxB subfamily. In terms of assembly, homodimer.

It localises to the cytoplasm. It carries out the reaction 4-phospho-D-erythronate + NAD(+) = (R)-3-hydroxy-2-oxo-4-phosphooxybutanoate + NADH + H(+). Its pathway is cofactor biosynthesis; pyridoxine 5'-phosphate biosynthesis; pyridoxine 5'-phosphate from D-erythrose 4-phosphate: step 2/5. Catalyzes the oxidation of erythronate-4-phosphate to 3-hydroxy-2-oxo-4-phosphonooxybutanoate. In Salmonella arizonae (strain ATCC BAA-731 / CDC346-86 / RSK2980), this protein is Erythronate-4-phosphate dehydrogenase.